A 382-amino-acid chain; its full sequence is Elongation factor Tu (382 aa).

GTP contacts are provided by residues 1–7 (HVDHGKT), 62–66 (DCPGH), and 117–120 (NKVD). Residues 1-190 (HVDHGKTTLT…AVDEYIPTPQ (190 aa)) form the tr-type G domain. Position 7 (threonine 7) interacts with Mg(2+).

This sequence belongs to the TRAFAC class translation factor GTPase superfamily. Classic translation factor GTPase family. EF-Tu/EF-1A subfamily. As to quaternary structure, monomer.

It localises to the cytoplasm. It carries out the reaction GTP + H2O = GDP + phosphate + H(+). GTP hydrolase that promotes the GTP-dependent binding of aminoacyl-tRNA to the A-site of ribosomes during protein biosynthesis. This chain is Elongation factor Tu, found in Chloroflexus aurantiacus.